The sequence spans 272 residues: Ribonuclease HII (272 aa).

Positions 87–272 (KYVAGVDEVG…HRMSFLKNIL (186 aa)) constitute an RNase H type-2 domain. A divalent metal cation contacts are provided by aspartate 93, glutamate 94, and aspartate 188.

Belongs to the RNase HII family. The cofactor is Mn(2+). Requires Mg(2+) as cofactor.

The protein resides in the cytoplasm. It catalyses the reaction Endonucleolytic cleavage to 5'-phosphomonoester.. Functionally, endonuclease that specifically degrades the RNA of RNA-DNA hybrids. The chain is Ribonuclease HII from Clostridium perfringens (strain 13 / Type A).